The chain runs to 171 residues: 2-vinyl bacteriochlorophyllide hydratase (171 aa).

Its pathway is porphyrin-containing compound metabolism; bacteriochlorophyll biosynthesis (light-independent). This chain is 2-vinyl bacteriochlorophyllide hydratase (bchF), found in Rhodobacter capsulatus (strain ATCC BAA-309 / NBRC 16581 / SB1003).